A 405-amino-acid chain; its full sequence is MSSAVLLLLVCGCALAVLSPVAYGAPMDTDDRPVWDSIRLCDIPNEPNPGQCMLPAECVAYGKINDVSSLSSIERFSFIKQIQCNGSDTVPYVCCPRDSDAYREPYVNETMVPKNRVASRIAFDADSCGIQSYVAKIRGGQLAEIDEFPWMAMLLYERDNNALTQGCGGALISRTYVITAAHCVTGKNFQQTKGRLKFVRLREYNIHTNPDCVYENDLKDCSDDMIDLVPQAVIPHPEYDSESSNQQHDIALIRIEQTPPFTDFLRSICLPEQNFESSATPGKKLSVSGWGRTDIFKDNLGPDVLSPIKLKLSLPYVEREKCSKTFRPWSFALGPGQMCAGGERAKDTCAGDSGSPLMSYDMKRAIWYITGIVSLGVRGCGVEGLPGVYTNVHHYLPWIKMYTGA.

An N-terminal signal peptide occupies residues 1 to 24 (MSSAVLLLLVCGCALAVLSPVAYG). 3 cysteine pairs are disulfide-bonded: C41/C94, C52/C84, and C58/C95. Residues 41 to 95 (CDIPNEPNPGQCMLPAECVAYGKINDVSSLSSIERFSFIKQIQCNGSDTVPYVCC) form the Clip domain. N-linked (GlcNAc...) asparagine glycans are attached at residues N85 and N108. Residues 137-404 (IRGGQLAEID…YLPWIKMYTG (268 aa)) form the Peptidase S1 domain. An intrachain disulfide couples C167 to C183. Active-site charge relay system residues include H182 and D249. 2 disulfide bridges follow: C322-C339 and C349-C380. The Charge relay system role is filled by S353.

The protein belongs to the peptidase S1 family. CLIP subfamily. In terms of processing, proteolytic cleavage is necessary for activation. Cleaved and activated by CLIPB4.

The protein resides in the secreted. Serine protease that functions in the melanization-mediated immune response. Preferentially, cleaves substrates with an arginine at the P1 site. May be involved in the activation of the prophenoloxidase cascade upstream of CLIPB9; does not cleave prophenoloxidase. This Anopheles gambiae (African malaria mosquito) protein is CLIP domain-containing serine protease B8.